We begin with the raw amino-acid sequence, 561 residues long: Nucleoprotein (561 aa).

The binding site for the cap structure m7GTP stretch occupies residues 52–237 (VRKDKRTDSD…ISHEPSALNI (186 aa)). Residues 336-355 (SKPSAIQPPVRNGGSPDLKQ) are disordered. Mn(2+)-binding residues include aspartate 380 and glutamate 382. Zn(2+) is bound by residues glutamate 390, cysteine 497, histidine 500, and cysteine 521. Aspartate 525 contributes to the Mn(2+) binding site.

It belongs to the arenaviridae nucleocapsid protein family. Homomultimerizes to form the nucleocapsid. Binds to viral genomic RNA. Interacts with glycoprotein G2. Interacts with protein Z; this interaction probably directs the encapsidated genome to budding sites. Interacts with protein L; this interaction does not interfere with Z-L interaction. Interacts with host IKBKE (via Protein kinase domain); the interaction inhibits IKBKE kinase activity.

Its subcellular location is the virion. The protein resides in the host cytoplasm. Encapsidates the genome, protecting it from nucleases. The encapsidated genomic RNA is termed the nucleocapsid (NC). Serves as template for viral transcription and replication. The increased presence of protein N in host cell does not seem to trigger the switch from transcription to replication as observed in other negative strain RNA viruses. Through the interaction with host IKBKE, strongly inhibits the phosphorylation and nuclear translocation of host IRF3, a protein involved in interferon activation pathway, leading to the inhibition of interferon-beta and IRF3-dependent promoters activation. Also encodes a functional 3'-5' exoribonuclease that degrades preferentially dsRNA substrates and thereby participates in the suppression of interferon induction. This is Nucleoprotein from Cavia cutleri (Guinea pig).